The primary structure comprises 177 residues: Coatomer subunit zeta-1 (177 aa).

Position 1 is an N-acetylmethionine (methionine 1).

The protein belongs to the adaptor complexes small subunit family. In terms of assembly, oligomeric complex that consists of at least the alpha, beta, beta', gamma, delta, epsilon and zeta subunits.

It localises to the cytoplasm. The protein localises to the golgi apparatus membrane. It is found in the cytoplasmic vesicle. Its subcellular location is the COPI-coated vesicle membrane. The coatomer is a cytosolic protein complex that binds to dilysine motifs and reversibly associates with Golgi non-clathrin-coated vesicles, which further mediate biosynthetic protein transport from the ER, via the Golgi up to the trans Golgi network. Coatomer complex is required for budding from Golgi membranes, and is essential for the retrograde Golgi-to-ER transport of dilysine-tagged proteins. The zeta subunit may be involved in regulating the coat assembly and, hence, the rate of biosynthetic protein transport due to its association-dissociation properties with the coatomer complex. In Homo sapiens (Human), this protein is Coatomer subunit zeta-1 (COPZ1).